We begin with the raw amino-acid sequence, 87 residues long: Phospholemman (87 aa).

The first 20 residues, 1–20 (MASLSHILVLWVGILTVVNA), serve as a signal peptide directing secretion. The Extracellular segment spans residues 21 to 35 (EAPQEHDPFTYDYQS). A helical transmembrane segment spans residues 36–56 (LRIGGLIIAGILFILGILIVL). Residues 57 to 87 (SRRCRCKFNQQQSLGKMRSPHLAAQFSSESC) lie on the Cytoplasmic side of the membrane. A lipid anchor (S-palmitoyl cysteine) is attached at C60. C62 is subject to S-glutathionyl cysteine; alternate. The S-palmitoyl cysteine; alternate moiety is linked to residue C62. At S75 the chain carries Phosphoserine; by PKA and PKC. S83 is subject to Phosphoserine; by PKA.

Belongs to the FXYD family. As to quaternary structure, homotetramer. Monomer. Regulatory subunit of the sodium/potassium-transporting ATPase (NKA) which is composed of a catalytic alpha subunit, a non-catalytic beta subunit and an additional regulatory subunit. The monomeric form associates with NKA while the oligomeric form does not. Interacts with the catalytic alpha-1 subunit ATP1A1. Also interacts with the catalytic alpha-2 and alpha-3 subunits ATP1A2 and ATP1A3. Very little interaction with ATP1A1, ATP1A2 or ATP1A3 when phosphorylated at Ser-83. Interacts with the non-catalytic beta-1 subunit ATP1B1. Oxidative stress decreases interaction with ATP1A1 but increases interaction with ATP1B1. In terms of processing, major plasma membrane substrate for cAMP-dependent protein kinase (PKA) and protein kinase C (PKC) in several different tissues. Phosphorylated in response to insulin and adrenergic stimulation. Phosphorylation at Ser-83 stimulates sodium/potassium-transporting ATPase activity while the unphosphorylated form inhibits sodium/potassium-transporting ATPase activity. Phosphorylation increases tetramerization, decreases binding to ATP1A1 and reduces inhibition of ATP1A1 activity. Phosphorylation at Ser-75 leads to greatly reduced interaction with ATP1A1, ATP1A2 and ATP1A3. May be phosphorylated by DMPK. Post-translationally, palmitoylation increases half-life and stability and is enhanced upon phosphorylation at Ser-83 by PKA.

Its subcellular location is the cell membrane. It is found in the sarcolemma. The protein resides in the apical cell membrane. It localises to the membrane. The protein localises to the caveola. Its subcellular location is the T-tubule. Associates with and regulates the activity of the sodium/potassium-transporting ATPase (NKA) which transports Na(+) out of the cell and K(+) into the cell. Inhibits NKA activity in its unphosphorylated state and stimulates activity when phosphorylated. Reduces glutathionylation of the NKA beta-1 subunit ATP1B1, thus reversing glutathionylation-mediated inhibition of ATP1B1. Contributes to female sexual development by maintaining the excitability of neurons which secrete gonadotropin-releasing hormone. In Sus scrofa (Pig), this protein is Phospholemman.